The chain runs to 346 residues: Small ribosomal subunit biogenesis GTPase RsgA (346 aa).

In terms of domain architecture, CP-type G spans 98–261 (VQGGRGPQLA…VIDTPGMRTL (164 aa)). GTP is bound by residues 148-151 (TKAD) and 200-208 (GSSGVGKST). Zn(2+) contacts are provided by C284, C289, H291, and C297. The interval 317 to 346 (RKLSDENQHNTPVQSGPRGAKSPAGRGKRR) is disordered.

Belongs to the TRAFAC class YlqF/YawG GTPase family. RsgA subfamily. In terms of assembly, monomer. Associates with 30S ribosomal subunit, binds 16S rRNA. Zn(2+) is required as a cofactor.

Its subcellular location is the cytoplasm. Its function is as follows. One of several proteins that assist in the late maturation steps of the functional core of the 30S ribosomal subunit. Helps release RbfA from mature subunits. May play a role in the assembly of ribosomal proteins into the subunit. Circularly permuted GTPase that catalyzes slow GTP hydrolysis, GTPase activity is stimulated by the 30S ribosomal subunit. The sequence is that of Small ribosomal subunit biogenesis GTPase RsgA from Mesorhizobium japonicum (strain LMG 29417 / CECT 9101 / MAFF 303099) (Mesorhizobium loti (strain MAFF 303099)).